We begin with the raw amino-acid sequence, 314 residues long: THAP domain-containing protein 11 (314 aa).

A THAP-type zinc finger spans residues 1-80 (MPGFTCCVPG…TYTVRVPTIF (80 aa)). The disordered stretch occupies residues 85-111 (VNERKVARRPAGAAAARRRQQQQQQQQ). Low complexity predominate over residues 93-111 (RPAGAAAARRRQQQQQQQQ). Positions 243–246 (DHSY) match the HCFC1-binding motif (HBM) motif. Residues 255-305 (EELLRKLNEQRDILALMEVKMKEMKGSIRHLRLTEAKLREELREKDRLLAM) adopt a coiled-coil conformation.

It belongs to the THAP11 family. As to quaternary structure, forms homodimers. Interacts via HBM with HCFC1. Forms a complex with HCFC1 and ZNF143. As to expression, expressed in skin fibroblasts.

The protein localises to the nucleus. The protein resides in the cytoplasm. Its function is as follows. Transcription factor, which has both transcriptional activation and repression activities. Also modulates chromatin accessibility. In complex with HCFC1 and ZNF143, regulates the expression of several genes, including AP2S1, ESCO2, OPHN1, RBL1, UBXN8 and ZNF32. May regulate the expression of genes that encode both cytoplasmic and mitochondrial ribosomal proteins. Required for normal mitochondrial development and function. Regulates mitochondrial gene expression, including that of components of the electron transport chain. Involved in the maintainance of pluripotency in early embryonic cells, possibly through its action on mitochondrial maturation which is required to meet high energy demands of these cells. Required for early development of retina, preventing premature exit of retinal progenitor cells from the cell cycle. This effect may also be mediated by its action on mitochondria. Through the regulation of MMACHC gene expression, controls cobalamin metabolism. Required for normal brain development and neural precursor differentiation. Involved in cell growth. This Homo sapiens (Human) protein is THAP domain-containing protein 11 (THAP11).